A 437-amino-acid chain; its full sequence is tRNA modification GTPase MnmE (437 aa).

(6S)-5-formyl-5,6,7,8-tetrahydrofolate is bound by residues R21, E79, and R119. One can recognise a TrmE-type G domain in the interval 223 to 364; that stretch reads GFRVVLAGPP…FRSALIAHAR (142 aa). Residues 233 to 238, 252 to 258, and 277 to 280 each bind GTP; these read NAGKST, AAEPGTT, and DTAG. S237 and T258 together coordinate Mg(2+). K437 contributes to the (6S)-5-formyl-5,6,7,8-tetrahydrofolate binding site.

The protein belongs to the TRAFAC class TrmE-Era-EngA-EngB-Septin-like GTPase superfamily. TrmE GTPase family. Homodimer. Heterotetramer of two MnmE and two MnmG subunits. K(+) serves as cofactor.

The protein resides in the cytoplasm. Functionally, exhibits a very high intrinsic GTPase hydrolysis rate. Involved in the addition of a carboxymethylaminomethyl (cmnm) group at the wobble position (U34) of certain tRNAs, forming tRNA-cmnm(5)s(2)U34. In Novosphingobium aromaticivorans (strain ATCC 700278 / DSM 12444 / CCUG 56034 / CIP 105152 / NBRC 16084 / F199), this protein is tRNA modification GTPase MnmE.